A 383-amino-acid polypeptide reads, in one-letter code: S-adenosylmethionine synthase (383 aa).

His22 is a binding site for ATP. Asp24 lines the Mg(2+) pocket. Residue Glu50 coordinates K(+). L-methionine contacts are provided by Glu63 and Gln99. Residues 99–109 (QSSEINQAVQS) form a flexible loop region. ATP is bound by residues 160–162 (DMK), Asp235, 241–242 (RK), Ser258, and Lys262. Residue Asp235 participates in L-methionine binding. Lys266 contributes to the L-methionine binding site.

Belongs to the AdoMet synthase family. In terms of assembly, homotetramer; dimer of dimers. Mg(2+) is required as a cofactor. K(+) serves as cofactor.

It localises to the cytoplasm. The catalysed reaction is L-methionine + ATP + H2O = S-adenosyl-L-methionine + phosphate + diphosphate. It participates in amino-acid biosynthesis; S-adenosyl-L-methionine biosynthesis; S-adenosyl-L-methionine from L-methionine: step 1/1. In terms of biological role, catalyzes the formation of S-adenosylmethionine (AdoMet) from methionine and ATP. The overall synthetic reaction is composed of two sequential steps, AdoMet formation and the subsequent tripolyphosphate hydrolysis which occurs prior to release of AdoMet from the enzyme. In Mycoplasma pneumoniae (strain ATCC 29342 / M129 / Subtype 1) (Mycoplasmoides pneumoniae), this protein is S-adenosylmethionine synthase.